The chain runs to 695 residues: DUF724 domain-containing protein 3 (695 aa).

The segment at isoleucine 376–aspartate 464 is disordered. Positions glutamine 384–lysine 402 are enriched in basic and acidic residues. Residues asparagine 434–threonine 459 show a composition bias toward polar residues. Positions proline 509–proline 694 constitute a DUF724 domain. The stretch at valine 614–glutamate 684 forms a coiled coil.

In terms of assembly, homodimer.

In terms of biological role, may be involved in the polar growth of plant cells via transportation of RNAs. This Arabidopsis thaliana (Mouse-ear cress) protein is DUF724 domain-containing protein 3.